The chain runs to 302 residues: tRNA pseudouridine synthase B (302 aa).

Catalysis depends on aspartate 38, which acts as the Nucleophile.

Belongs to the pseudouridine synthase TruB family. Type 1 subfamily.

It catalyses the reaction uridine(55) in tRNA = pseudouridine(55) in tRNA. In terms of biological role, responsible for synthesis of pseudouridine from uracil-55 in the psi GC loop of transfer RNAs. This chain is tRNA pseudouridine synthase B, found in Geobacillus thermodenitrificans (strain NG80-2).